The chain runs to 309 residues: DNA replication terminus site-binding protein (309 aa).

It belongs to the Tus family.

It is found in the cytoplasm. Functionally, trans-acting protein required for termination of DNA replication. Binds to DNA replication terminator sequences (terA to terF) to prevent the passage of replication forks. The termination efficiency will be affected by the affinity of this protein for the terminator sequence. This is DNA replication terminus site-binding protein from Yersinia enterocolitica serotype O:8 / biotype 1B (strain NCTC 13174 / 8081).